A 138-amino-acid polypeptide reads, in one-letter code: Translation initiation factor 2 subunit beta (138 aa).

It belongs to the eIF-2-beta/eIF-5 family. As to quaternary structure, heterotrimer composed of an alpha, a beta and a gamma chain.

Its function is as follows. eIF-2 functions in the early steps of protein synthesis by forming a ternary complex with GTP and initiator tRNA. This chain is Translation initiation factor 2 subunit beta, found in Methanococcus maripaludis (strain DSM 14266 / JCM 13030 / NBRC 101832 / S2 / LL).